The chain runs to 566 residues: Putative sensory transducer protein YvaQ (566 aa).

A signal peptide spans 1–31 (MRLTISRKFSLVFLTLILINLLVGGIGVLNM). Positions 74-110 (DKSKMDTLDQEMNQIMEDINQKLDNYEKTISTDKEQK) form a coiled coil. Residues 186-206 (IYTALLVAASILISIFIWLYI) traverse the membrane as a helical segment. Residues 208–261 (RNIVKPIIRMKESANHIAEGDLSNDMEALNSKDELGDLNEALQKMVGNLRDIVG) form the HAMP domain. Positions 280–530 (ATNETRSGSK…ESAAGIEETF (251 aa)) constitute a Methyl-accepting transducer domain. Positions 536–566 (SAHSMDQVLLNAEELEQLANELNEKMGQFTI) form a coiled coil.

This sequence belongs to the methyl-accepting chemotaxis (MCP) protein family.

The protein localises to the cell membrane. Functionally, chemotactic-signal transducers respond to changes in the concentration of attractants and repellents in the environment, transduce a signal from the outside to the inside of the cell, and facilitate sensory adaptation through the variation of the level of methylation. Attractants increase the level of methylation while repellents decrease the level of methylation. The protein is Putative sensory transducer protein YvaQ (yvaQ) of Bacillus subtilis (strain 168).